The chain runs to 457 residues: Putative hexose transporter 12 (457 aa).

At 1-2 (MG) the chain is on the cytoplasmic side. Residues 3 to 23 (LIVSIFNIGCAIGGIVLSKVG) traverse the membrane as a helical segment. At 24–29 (DIYGRR) the chain is on the extracellular side. The chain crosses the membrane as a helical span at residues 30 to 50 (IGLITVTAIYVVGILIQITSI). The Cytoplasmic segment spans residues 51–60 (NKWYQYFIGR). The chain crosses the membrane as a helical span at residues 61–81 (IISGIGVGGIAVLSPMLISEV). Residues 82 to 87 (APKHIR) lie on the Extracellular side of the membrane. Residues 88–108 (GTLVQLYQLMGTMGIFLGYCT) form a helical membrane-spanning segment. Over 109-122 (NYGTKNYHNATQWR) the chain is Cytoplasmic. A helical membrane pass occupies residues 123-143 (VGLGLCFAWATFMVSGMMFVP). At 144–247 (ESPRYLIEVG…KSVGLKDSFQ (104 aa)) the chain is on the extracellular side. The N-linked (GlcNAc...) asparagine glycan is linked to asparagine 194. Residues 248–268 (TSIIIGVVNFFSSFIAVYTIE) form a helical membrane-spanning segment. The Cytoplasmic segment spans residues 269–274 (RFGRRT). The helical transmembrane segment at 275–295 (CLLWGAASMLCCFAVFASVGV) threads the bilayer. Topologically, residues 296 to 319 (TKLWPQGSSHQDITSQGAGNCMIV) are extracellular. The helical transmembrane segment at 320–340 (FTMFFIFSFATTWAGGCFVIV) threads the bilayer. The Cytoplasmic segment spans residues 341–353 (SETFPLRAKSRGM). The helical transmembrane segment at 354 to 374 (AIATAANWMWGFLISFFTPFI) threads the bilayer. At 375-379 (TGAIN) the chain is on the extracellular side. A helical transmembrane segment spans residues 380 to 400 (FYYGYVFLGCLVFAYFYVFFF). Over 401–457 (VPETKGLTLEEVNTMWLEGVPAWKSASWVPPERRTADYDADAIDHDNRPIYKRFFSS) the chain is Cytoplasmic.

This sequence belongs to the major facilitator superfamily. Sugar transporter (TC 2.A.1.1) family.

It localises to the membrane. Probable glucose transporter. This Saccharomyces cerevisiae (strain ATCC 204508 / S288c) (Baker's yeast) protein is Putative hexose transporter 12 (HXT12).